The primary structure comprises 215 residues: Pyridoxine/pyridoxamine 5'-phosphate oxidase (215 aa).

Substrate-binding positions include 9–12 and Lys69; that span reads RRDY. Residues 64–69, 79–80, Lys86, and Gln108 each bind FMN; these read RVLLLK and FS. Substrate-binding residues include Tyr126, Arg130, and Ser134. FMN-binding positions include 143-144 and Trp188; that span reads QS. 194–196 lines the substrate pocket; it reads RLH. Residue Arg198 coordinates FMN.

This sequence belongs to the pyridoxamine 5'-phosphate oxidase family. Homodimer. Requires FMN as cofactor.

The enzyme catalyses pyridoxamine 5'-phosphate + O2 + H2O = pyridoxal 5'-phosphate + H2O2 + NH4(+). It catalyses the reaction pyridoxine 5'-phosphate + O2 = pyridoxal 5'-phosphate + H2O2. The protein operates within cofactor metabolism; pyridoxal 5'-phosphate salvage; pyridoxal 5'-phosphate from pyridoxamine 5'-phosphate: step 1/1. Its pathway is cofactor metabolism; pyridoxal 5'-phosphate salvage; pyridoxal 5'-phosphate from pyridoxine 5'-phosphate: step 1/1. In terms of biological role, catalyzes the oxidation of either pyridoxine 5'-phosphate (PNP) or pyridoxamine 5'-phosphate (PMP) into pyridoxal 5'-phosphate (PLP). The protein is Pyridoxine/pyridoxamine 5'-phosphate oxidase of Azotobacter vinelandii (strain DJ / ATCC BAA-1303).